Here is a 384-residue protein sequence, read N- to C-terminus: Cobalt-precorrin-5B C(1)-methyltransferase (384 aa).

The protein belongs to the CbiD family.

It carries out the reaction Co-precorrin-5B + S-adenosyl-L-methionine = Co-precorrin-6A + S-adenosyl-L-homocysteine. Its pathway is cofactor biosynthesis; adenosylcobalamin biosynthesis; cob(II)yrinate a,c-diamide from sirohydrochlorin (anaerobic route): step 6/10. Functionally, catalyzes the methylation of C-1 in cobalt-precorrin-5B to form cobalt-precorrin-6A. The sequence is that of Cobalt-precorrin-5B C(1)-methyltransferase from Ruminiclostridium cellulolyticum (strain ATCC 35319 / DSM 5812 / JCM 6584 / H10) (Clostridium cellulolyticum).